The chain runs to 611 residues: Mitochondrial import receptor subunit TOM70 (611 aa).

A2 is modified (N-acetylalanine). Over 2-41 the chain is Mitochondrial intermembrane; that stretch reads AASKPIEAAMAAAAAPGSGNGVGGGGGTAGPGSGAGTLPR. Residues 42–62 traverse the membrane as a helical segment; that stretch reads WHVALAIGAPLLLGAGAMYLW. Residues 63-611 lie on the Cytoplasmic side of the membrane; it reads SRRRRRREAG…KKYGLKPPTL (549 aa). The disordered stretch occupies residues 69-110; it reads REAGGRGDASGLKRNSERKTPEGRASPALGSGHHDGSGDSLE. R74 bears the Omega-N-methylarginine mark. A phosphoserine mark is found at S94, S99, S105, S108, and S113. 2 TPR repeats span residues 117-150 and 156-189; these read AQAA…CPTE and STFY…NPKY. K188 carries the post-translational modification N6-acetyllysine. Residue K278 forms a Glycyl lysine isopeptide (Lys-Gly) (interchain with G-Cter in SUMO2) linkage. TPR repeat units follow at residues 297–330, 332–365, 370–403, 404–437, 445–478, 479–512, 514–547, and 548–581; these read ENSG…QGKY, AEAL…KEAN, ANAL…DPMN, SDVY…RPKF, CFAL…FPRC, AEGY…EPDN, TTYV…DNKC, and DFAY…AKSE.

This sequence belongs to the Tom70 family. In terms of assembly, forms part of the preprotein translocase complex of the outer mitochondrial membrane (TOM complex) which consists of at least 7 different proteins (TOMM5, TOMM6, TOMM7, TOMM20, TOMM22, TOMM40 and TOMM70). Interacts with CAPN8. Interacts with TRADD, TRAF6 and STING. Interacts with MAVS. Interacts with HSPA8 and HSP90AA1; both interactions are required for preprotein mitochondrial import. The interaction with HSP90AA1 is direct and mediates the association of TOMM70 with IRF3 and TBK1. Upon mitochondrial depolarization, interacts with PINK1; the interaction is required for PINK1-TOM-TIM23 supercomplex formation which is critical for PINK1 stabilization at the outer mitochondrial membrane, kinase activation and downstream mitophagy. As to expression, expressed in the base region of the oxyntic and pyloric mucosae.

It localises to the mitochondrion outer membrane. Functionally, acts as a receptor of the preprotein translocase complex of the outer mitochondrial membrane (TOM complex). Recognizes and mediates the translocation of mitochondrial preproteins from the cytosol into the mitochondria in a chaperone dependent manner. Mediates TBK1 and IRF3 activation induced by MAVS in response to virus infection and promotes host antiviral responses during virus infection. This Mus musculus (Mouse) protein is Mitochondrial import receptor subunit TOM70.